We begin with the raw amino-acid sequence, 685 residues long: Invasion protein InvA (685 aa).

Helical transmembrane passes span 17–37 (ILVL…TYLV), 39–59 (FLIA…FYID), 61–81 (ILSF…RLAL), 110–130 (SLAV…IVIT), 197–217 (AIAG…VGMT), 235–255 (IGDG…AGFI), 274–294 (LLNN…MGTL), and 295–315 (PGFP…LFYF).

Belongs to the FHIPEP (flagella/HR/invasion proteins export pore) family.

It is found in the cell inner membrane. In terms of biological role, involved in the invasion of the cells of the intestinal epithelium. Could be involved in the translocation of the InvE protein. In Salmonella typhi, this protein is Invasion protein InvA (invA).